Reading from the N-terminus, the 404-residue chain is Zinc metalloprotease Rip1 (404 aa).

A helical membrane pass occupies residues 1 to 21 (MMFVTGIVLFALAILISVALH). Histidine 21 is a binding site for Zn(2+). Glutamate 22 is an active-site residue. Histidine 25 provides a ligand contact to Zn(2+). A helical membrane pass occupies residues 104-124 (PGMNLAICLVLIYAIALVWGL). The 83-residue stretch at 121-203 (VWGLPNLHPP…SVPIVVERDG (83 aa)) folds into the PDZ domain. Residue aspartate 202 participates in Zn(2+) binding. Transmembrane regions (helical) follow at residues 313 to 333 (LWVAFWFFLAQLNLILAAINL) and 373 to 393 (LLPATYVVLVLVVGYMLLTVT).

It belongs to the peptidase M50B family. It depends on Zn(2+) as a cofactor.

It is found in the cell membrane. A probable site-2 protease (S2P) that cleaves type-2 transmembrane proteins within their membrane-spanning domains. Degrades anti-sigma factors RskA, RslA and RsmA, releasing sigma factors SigK, SigL and SigM from the cellular membrane, activating signaling pathways. Does not act on RsdA. Regulates the composition of extractable mycolic acids in the cell envelope in response to changes in membrane fluidity. Mediates transcriptional regulation of mycolic acid biosynthetic genes in response to detergent. Probably also cleaves PbpB (PBP3, FtsI); this cleavage is inhibited by Wag31-PbpBI interaction. Its function is as follows. Regulated intramembrane proteolysis (RIP) occurs when an extracytoplasmic signal (possibly oxidative stress) triggers a concerted proteolytic cascade to transmit information and elicit cellular responses. The membrane-spanning regulatory substrate protein (includes anti-sigma factors RskA, RslA, RsmA, and PbpB) is first cut extracytoplasmically (site-1 protease, S1P), then within the membrane itself (site-2 protease, S2P, this entry), while cytoplasmic proteases finish degrading the regulatory protein, liberating the effector protein (ECF sigma factors SigK, SigL and SigM). The polypeptide is Zinc metalloprotease Rip1 (rip1) (Mycobacterium tuberculosis (strain ATCC 35801 / TMC 107 / Erdman)).